Reading from the N-terminus, the 610-residue chain is Zinc metalloproteinase-disintegrin-like bothropasin (610 aa).

Residues 1–20 (MIEVLLVTICLAAFPYQGSS) form the signal peptide. A propeptide spanning residues 21-191 (IILESGNVND…ASQLVVTAEQ (171 aa)) is cleaved from the precursor. Gln-192 is subject to Pyrrolidone carboxylic acid. The Peptidase M12B domain maps to 198–394 (RYVELFIVVD…ENPQCILNEP (197 aa)). Residues Glu-201 and Asp-285 each contribute to the Ca(2+) site. 3 disulfides stabilise this stretch: Cys-309–Cys-389, Cys-349–Cys-373, and Cys-351–Cys-356. His-334 contacts Zn(2+). Residue Glu-335 is part of the active site. Zn(2+)-binding residues include His-338 and His-344. Residue Asn-372 is glycosylated (N-linked (GlcNAc...) asparagine). Residues Cys-389, Asn-392, Val-404, Asn-407, Leu-409, Glu-411, Glu-414, and Asp-417 each coordinate Ca(2+). One can recognise a Disintegrin domain in the interval 402–488 (PPVCGNELLE…ECPADVFHKN (87 aa)). Disulfide bonds link Cys-405-Cys-424, Cys-405-Cys-434, Cys-416-Cys-429, Cys-416-Cys-434, Cys-418-Cys-424, Cys-428-Cys-451, Cys-442-Cys-448, Cys-447-Cys-473, Cys-460-Cys-480, Cys-467-Cys-492, Cys-467-Cys-499, Cys-492-Cys-504, Cys-499-Cys-504, Cys-511-Cys-526, Cys-511-Cys-561, Cys-526-Cys-572, Cys-539-Cys-549, Cys-549-Cys-556, Cys-556-Cys-598, Cys-561-Cys-572, Cys-592-Cys-603, and Cys-598-Cys-603. The short motif at 466–468 (ECD) is the D/ECD-tripeptide element. Ca(2+) is bound by residues Asp-468, Pro-469, Glu-471, Asp-483, and Val-484.

The protein belongs to the venom metalloproteinase (M12B) family. P-III subfamily. P-IIIb sub-subfamily. As to quaternary structure, monomer. Zn(2+) is required as a cofactor. Expressed by the venom gland.

The protein resides in the secreted. It carries out the reaction Cleavage of 5-His-|-Leu-6, 10-His-|-Leu-11, 14-Ala-|-Leu-15, 16-Tyr-|-Leu-17 and 24-Phe-|-Phe-25 in insulin B chain.. Its activity is regulated as follows. Inhibited by EDTA and EGTA. Its function is as follows. Has caseinolytic activity. Causes hemorrhage on rabbit skin and causes myonecrosis in mouse tibialis anterior muscle. Inhibits platelet aggregation. The polypeptide is Zinc metalloproteinase-disintegrin-like bothropasin (Bothrops jararaca (Jararaca)).